The sequence spans 514 residues: Na(+)/H(+) antiporter NhaB (514 aa).

The next 12 membrane-spanning stretches (helical) occupy residues 23-43 (LALLVFLIVNPFIFLANPFVA), 63-83 (PLLPGGLLAIEAVIIGMTSAA), 97-117 (LLLMFMVAGIYFMKQLLLFIF), 120-140 (LLLSIRSKMVLSLAFCVAAAF), 144-164 (FLDALTVVAVVISVAVGFYGI), 202-222 (LMMHAGVGTALGGVMTMVGEP), 238-258 (FFLRMSPVTVPVLVCGLLTCM), 303-323 (AVIGVWLVTALALHLAEVGLI), 357-377 (LTVFFSIVAVIIDQHLFAPII), 391-411 (LFYLFNGLLSSISDNVFVGTI), 447-467 (ATPNGQAAFLFLLTSALAPLI), and 475-495 (VWMALPYTIVLTLIGLLCVEF).

This sequence belongs to the NhaB Na(+)/H(+) (TC 2.A.34) antiporter family.

The protein resides in the cell inner membrane. It catalyses the reaction 2 Na(+)(in) + 3 H(+)(out) = 2 Na(+)(out) + 3 H(+)(in). Functionally, na(+)/H(+) antiporter that extrudes sodium in exchange for external protons. The chain is Na(+)/H(+) antiporter NhaB from Salmonella agona (strain SL483).